The chain runs to 375 residues: All-trans-retinol dehydrogenase [NAD(+)] ADH1B (375 aa).

Ser-2 is subject to N-acetylserine. Phosphoserine is present on Ser-23. Tyr-35 carries the phosphotyrosine modification. Positions 47, 68, 98, 101, 104, 112, and 175 each coordinate Zn(2+). NAD(+)-binding positions include 200–205 (GLGGVG), Asp-224, Lys-229, 293–295 (VGV), and Arg-370.

This sequence belongs to the zinc-containing alcohol dehydrogenase family. As to quaternary structure, dimer of identical or non-identical chains of three types; alpha, beta and gamma. The cofactor is Zn(2+).

The protein resides in the cytoplasm. It carries out the reaction all-trans-retinol + NAD(+) = all-trans-retinal + NADH + H(+). It catalyses the reaction all-trans-4-hydroxyretinol + NAD(+) = all-trans-4-hydroxyretinal + NADH + H(+). The catalysed reaction is all-trans-4-oxoretinol + NAD(+) = all-trans-4-oxoretinal + NADH + H(+). Catalyzes the NAD-dependent oxidation of all-trans-retinol and its derivatives such as all-trans-4-hydroxyretinol and may participate in retinoid metabolism. In vitro can also catalyze the NADH-dependent reduction of all-trans-retinal and its derivatives such as all-trans-4-oxoretinal. Catalyzes in the oxidative direction with higher efficiency. Has the same affinity for all-trans-4-hydroxyretinol and all-trans-4-oxoretinal. This is All-trans-retinol dehydrogenase [NAD(+)] ADH1B from Homo sapiens (Human).